The chain runs to 154 residues: MSESYKVISDNRQARFQYEILEVFEAGLALTGTEVKSIRAGKVNLRDGFAQIRNEEAFLLNVHVSPHTNAGQFFNHDPRRTRKLLMHRQEIRKLIGKTEQKGLTLVPLKLYLQRGWIKVTIGLARGKKLHDKRESIKKRQDKRDMERALKRGAE.

Positions 132–154 (KRESIKKRQDKRDMERALKRGAE) are disordered.

It belongs to the SmpB family.

The protein resides in the cytoplasm. Its function is as follows. Required for rescue of stalled ribosomes mediated by trans-translation. Binds to transfer-messenger RNA (tmRNA), required for stable association of tmRNA with ribosomes. tmRNA and SmpB together mimic tRNA shape, replacing the anticodon stem-loop with SmpB. tmRNA is encoded by the ssrA gene; the 2 termini fold to resemble tRNA(Ala) and it encodes a 'tag peptide', a short internal open reading frame. During trans-translation Ala-aminoacylated tmRNA acts like a tRNA, entering the A-site of stalled ribosomes, displacing the stalled mRNA. The ribosome then switches to translate the ORF on the tmRNA; the nascent peptide is terminated with the 'tag peptide' encoded by the tmRNA and targeted for degradation. The ribosome is freed to recommence translation, which seems to be the essential function of trans-translation. The polypeptide is SsrA-binding protein (Acaryochloris marina (strain MBIC 11017)).